The following is a 109-amino-acid chain: Thiosulfate sulfurtransferase GlpE (109 aa).

The Rhodanese domain occupies 17-105 (HQQTAVLVDI…WHRHFPAEVA (89 aa)). Catalysis depends on Cys-65, which acts as the Cysteine persulfide intermediate.

Belongs to the GlpE family.

It is found in the cytoplasm. It carries out the reaction thiosulfate + hydrogen cyanide = thiocyanate + sulfite + 2 H(+). It catalyses the reaction thiosulfate + [thioredoxin]-dithiol = [thioredoxin]-disulfide + hydrogen sulfide + sulfite + 2 H(+). Transferase that catalyzes the transfer of sulfur from thiosulfate to thiophilic acceptors such as cyanide or dithiols. May function in a CysM-independent thiosulfate assimilation pathway by catalyzing the conversion of thiosulfate to sulfite, which can then be used for L-cysteine biosynthesis. The sequence is that of Thiosulfate sulfurtransferase GlpE from Klebsiella pneumoniae (strain 342).